Here is a 986-residue protein sequence, read N- to C-terminus: Replication factor C subunit 1 (986 aa).

The interval 1 to 95 (MQRGIDSFFK…ALSKLKRHVD (95 aa)) is disordered. Residues Ser-18, Ser-28, Ser-40, Ser-41, Ser-48, and Ser-58 each carry the phosphoserine modification. Thr-60 is subject to Phosphothreonine. Ser-62 and Ser-63 each carry phosphoserine. At Thr-71 the chain carries Phosphothreonine. Residues Ser-128, Ser-137, Ser-149, Ser-154, Ser-156, Ser-164, and Ser-194 each carry the phosphoserine modification. Residues 136 to 147 (ESIKEAAPEKKV) show a composition bias toward basic and acidic residues. Disordered regions lie at residues 136-203 (ESIK…ERHE) and 317-388 (KQVK…NDVP). Thr-197 carries the phosphothreonine modification. Positions 232 to 322 (GSPDCLSGLT…SGIAKQVKEE (91 aa)) constitute a BRCT domain. Composition is skewed to basic and acidic residues over residues 317-364 (KQVK…EKHD) and 370-385 (VKEE…DKLN). 487 to 494 (GPPGIGKT) serves as a coordination point for ATP. Residues 913–986 (SEAAGADDDY…ASKSKAKAKK (74 aa)) are disordered. Positions 917–932 (GADDDYLDEGPGEEDG) are enriched in acidic residues. A phosphoserine mark is found at Ser-938 and Ser-939. The Nuclear localization signal signature appears at 955–959 (KAKKR). A compositionally biased stretch (low complexity) spans 962–979 (TSKASGGSKKATSSTASK).

The protein belongs to the activator 1 large subunit family. Interacts with C-terminus of PCNA.

The protein localises to the nucleus. Its function is as follows. The elongation of primed DNA templates by DNA polymerase delta and epsilon requires the action of the accessory proteins proliferating cell nuclear antigen (PCNA) and activator 1. This subunit binds to the primer-template junction. The sequence is that of Replication factor C subunit 1 (Gnf1) from Drosophila melanogaster (Fruit fly).